Reading from the N-terminus, the 105-residue chain is MIDIIVKEDKRLITVQTPEGDEVFYTLSFSDEHKLLKRSSARLRNNIYAIGVANIRWVLVDMDNMILSEYMHHVDILKDIDRKMRQLGYIVISEWQHANKKGTRR.

Belongs to the phi29likevirus gp16.8 family.

The protein is Gene product 16.8 (16.8) of Bacillus subtilis (Bacteriophage PZA).